The sequence spans 208 residues: ATP synthase subunit b (208 aa).

A signal peptide spans 1-27 (MVKAKKLVFKWSLLVFSFFTLSLFLVS). C28 is lipidated: N-palmitoyl cysteine. C28 carries S-diacylglycerol cysteine lipidation. Residues 49–69 (WVFITHLLAFFILLTLMIFLF) traverse the membrane as a helical segment.

The protein belongs to the ATPase B chain family. As to quaternary structure, F-type ATPases have 2 components, F(1) - the catalytic core - and F(0) - the membrane proton channel. F(1) has five subunits: alpha(3), beta(3), gamma(1), delta(1), epsilon(1). F(0) has three main subunits: a(1), b(2) and c(10-14). The alpha and beta chains form an alternating ring which encloses part of the gamma chain. F(1) is attached to F(0) by a central stalk formed by the gamma and epsilon chains, while a peripheral stalk is formed by the delta and b chains.

It is found in the cell membrane. In terms of biological role, f(1)F(0) ATP synthase produces ATP from ADP in the presence of a proton or sodium gradient. F-type ATPases consist of two structural domains, F(1) containing the extramembraneous catalytic core and F(0) containing the membrane proton channel, linked together by a central stalk and a peripheral stalk. During catalysis, ATP synthesis in the catalytic domain of F(1) is coupled via a rotary mechanism of the central stalk subunits to proton translocation. Its function is as follows. Component of the F(0) channel, it forms part of the peripheral stalk, linking F(1) to F(0). This Mycoplasma genitalium (strain ATCC 33530 / DSM 19775 / NCTC 10195 / G37) (Mycoplasmoides genitalium) protein is ATP synthase subunit b.